The following is a 515-amino-acid chain: Adenine DNA glycosylase (515 aa).

The segment covering 1–24 (MKKLQASVRSHKKQPANHKRRRTR) has biased composition (basic residues). Positions 1 to 38 (MKKLQASVRSHKKQPANHKRRRTRALSSSQAKPSSLDG) are disordered. Glu105 serves as the catalytic Proton donor/acceptor. [4Fe-4S] cluster contacts are provided by Cys261, Cys268, Cys271, and Cys277. The region spanning 335–466 (PREEYSATCV…AMKKVFRMYE (132 aa)) is the Nudix hydrolase domain. A Nudix box motif is present at residues 376–398 (VTLEPSEQHQHKALLQELQRWCG). Residues 468–494 (HRQGTRKGSKRSQVCPPSSRKKPSLGQ) are disordered.

The protein belongs to the Nth/MutY family. [4Fe-4S] cluster is required as a cofactor. In terms of tissue distribution, expressed in heart, lung, liver, intestine, brain and thymus.

Its subcellular location is the nucleus. The protein resides in the mitochondrion. It catalyses the reaction Hydrolyzes free adenine bases from 7,8-dihydro-8-oxoguanine:adenine mismatched double-stranded DNA, leaving an apurinic site.. Functionally, involved in oxidative DNA damage repair. Initiates repair of A*oxoG to C*G by removing the inappropriately paired adenine base from the DNA backbone. Possesses both adenine and 2-OH-A DNA glycosylase activities. The protein is Adenine DNA glycosylase (Mutyh) of Mus musculus (Mouse).